Here is an 80-residue protein sequence, read N- to C-terminus: Exodeoxyribonuclease 7 small subunit (80 aa).

The protein belongs to the XseB family. In terms of assembly, heterooligomer composed of large and small subunits.

It localises to the cytoplasm. It carries out the reaction Exonucleolytic cleavage in either 5'- to 3'- or 3'- to 5'-direction to yield nucleoside 5'-phosphates.. In terms of biological role, bidirectionally degrades single-stranded DNA into large acid-insoluble oligonucleotides, which are then degraded further into small acid-soluble oligonucleotides. The protein is Exodeoxyribonuclease 7 small subunit of Rickettsia felis (strain ATCC VR-1525 / URRWXCal2) (Rickettsia azadi).